Consider the following 232-residue polypeptide: Protein lin-7 homolog A (232 aa).

The Kinase interacting site signature appears at 14 to 28 (MATLTVVQPLTLDRD). The region spanning 25–80 (LDRDVARAIELLEKLQESGEVPVHKLQSLKKVLQSEFCTAIREVYQYMHETITVNG) is the L27 domain. The region spanning 108-190 (VVELPKTDEG…SVKLVVRYTP (83 aa)) is the PDZ domain.

This sequence belongs to the lin-7 family. As to quaternary structure, forms a complex with CASK and CASKIN1. Component of the brain-specific heterotrimeric complex (LIN-10-LIN-2-LIN-7 complex) composed of at least APBA1, CASK, and LIN7, which associates with the motor protein KIF17 to transport vesicles along microtubules. Can also interact with other modular proteins containing protein-protein interaction domains like PALS1, PALS2, MPP7, DLG1, DLG2 and DLG3 through its L27 domain. Interacts with DLG4 and GRIN2B as well as CDH1 and CTNNB1, the channels KCNJ12/Kir2.2, KCNJ4/Kir2.3 and probably KCNJ2/Kir2.1 and SLC6A12/BGT-1 via its PDZ domain. The association of LIN7A with cadherin and beta-catenin is calcium-dependent, occurs at synaptic junctions and requires the actin cytoskeleton. Interacts with EGFR, ERBB2, ERBB3 and ERBB4 with both PDZ and KID domains. Associates with KIF17 via APBA1. Interacts with HTR4. Forms a tripartite complex composed of DLG1, MPP7 and LIN7 (LIN7A or LIN7C). Interacts with MARCHF11. In terms of tissue distribution, ubiquitously expressed in brain and detected in lung, liver and testis (at protein level). Expression was detected only in brain.

The protein resides in the cell membrane. It localises to the basolateral cell membrane. It is found in the cell junction. Its subcellular location is the postsynaptic density membrane. The protein localises to the tight junction. Its function is as follows. Plays a role in establishing and maintaining the asymmetric distribution of channels and receptors at the plasma membrane of polarized cells. Forms membrane-associated multiprotein complexes that may regulate delivery and recycling of proteins to the correct membrane domains. The tripartite complex composed of LIN7 (LIN7A, LIN7B or LIN7C), CASK and APBA1 associates with the motor protein KIF17 to transport vesicles containing N-methyl-D-aspartate (NMDA) receptor subunit NR2B along microtubules. This complex may have the potential to couple synaptic vesicle exocytosis to cell adhesion in brain. Ensures the proper localization of GRIN2B (subunit 2B of the NMDA receptor) to neuronal postsynaptic density and may function in localizing synaptic vesicles at synapses where it is recruited by beta-catenin and cadherin. Required to localize Kir2 channels, GABA transporter (SLC6A12) and EGFR/ERBB1, ERBB2, ERBB3 and ERBB4 to the basolateral membrane of epithelial cells. This chain is Protein lin-7 homolog A (Lin7a), found in Rattus norvegicus (Rat).